Consider the following 459-residue polypeptide: Cysteine--tRNA ligase (459 aa).

Residue Cys28 coordinates Zn(2+). Positions 30-40 (ITIYDLCHIGH) match the 'HIGH' region motif. The Zn(2+) site is built by Cys209, His234, and Glu238. A 'KMSKS' region motif is present at residues 266 to 270 (KMSKS). Residue Lys269 participates in ATP binding.

Belongs to the class-I aminoacyl-tRNA synthetase family. As to quaternary structure, monomer. Zn(2+) is required as a cofactor.

It localises to the cytoplasm. The enzyme catalyses tRNA(Cys) + L-cysteine + ATP = L-cysteinyl-tRNA(Cys) + AMP + diphosphate. The polypeptide is Cysteine--tRNA ligase (Shewanella woodyi (strain ATCC 51908 / MS32)).